The sequence spans 228 residues: UPF0502 protein AZOSEA09860 (228 aa).

Belongs to the UPF0502 family.

The sequence is that of UPF0502 protein AZOSEA09860 from Aromatoleum aromaticum (strain DSM 19018 / LMG 30748 / EbN1) (Azoarcus sp. (strain EbN1)).